The following is an 898-amino-acid chain: Netrin receptor UNC5A (898 aa).

An N-terminal signal peptide occupies residues 1 to 25; sequence MAVRPGLWPALLGIVLTAWLRGSGA. Residues 26–361 are Extracellular-facing; sequence QQSATVANPV…TSSGPEDVAL (336 aa). The 98-residue stretch at 44–141 folds into the Ig-like domain; it reads PHFLVEPEDV…SGTTKSQKAY (98 aa). 3 disulfide bridges follow: Cys65–Cys126, Cys77–Cys124, and Cys170–Cys221. N-linked (GlcNAc...) asparagine glycosylation is found at Asn107 and Asn218. The 80-residue stretch at 155–234 folds into the Ig-like C2-type domain; it reads PLAKEVSLEQ…NIVARRRSAS (80 aa). 2 consecutive TSP type-1 domains span residues 242–296 and 298–350; these read NGGW…TLCP and DGSW…DLCL. Residues Trp245, Trp248, and Trp251 are each glycosylated (C-linked (Man) tryptophan). Cystine bridges form between Cys254-Cys291, Cys258-Cys295, and Cys269-Cys281. C-linked (Man) tryptophan glycans are attached at residues Trp301 and Trp304. 3 disulfides stabilise this stretch: Cys310/Cys344, Cys314/Cys349, and Cys322/Cys334. The N-linked (GlcNAc...) asparagine glycan is linked to Asn343. Residues 362-382 traverse the membrane as a helical segment; the sequence is YIGLVAVAVCLILLLLVLVLI. The Cytoplasmic portion of the chain corresponds to 383-898; sequence YCRKKEGLDS…GLFTVSEAEC (516 aa). The ZU5 domain occupies 497–640; that stretch reads NMAYGTFNFL…LGRFALVGEA (144 aa). The segment at 661–679 is interaction with DCC; it reads SLEYNIRVYCLHDTHDALK. Positions 817-897 constitute a Death domain; sequence QKIITSLDPP…AGLFTVSEAE (81 aa).

It belongs to the unc-5 family. As to quaternary structure, homodimer and homooligomer. Interacts with the cytoplasmic part of DCC. Interacts with MAGED1. Interacts with PRKCABP, possibly mediating some interaction with PKC. Interacts (via extracellular domain) with FLRT2 (via extracellular domain). Interacts (via extracellular domain) with FLRT3 (via extracellular domain). Post-translationally, phosphorylated on cytoplasmic tyrosine residues. Phosphorylated by PKC in vitro. In terms of processing, proteolytically cleaved by caspases during apoptosis. The cleavage does not take place when the receptor is associated with netrin ligand. Its cleavage by caspases is required to induce apoptosis. The two extracellular TSRs of UNC5A contain WxxWxxWxxC motifs that can be C-mannosylated on all tryptophans. DPY19L1 preferentially mannosylates the first two tryptophans and DPY19L3 prefers the third. C-mannosylation by DPY19L1 is required for transport of UNC5A from the endoplasmic reticulum to the cell surface. Restricted to central nervous system.

It localises to the cell membrane. Its subcellular location is the membrane raft. It is found in the cell projection. The protein localises to the neuron projection. Its function is as follows. Receptor for netrin required for axon guidance. Functions in the netrin signaling pathway and promotes neurite outgrowth in response to NTN1. Mediates axon repulsion of neuronal growth cones in the developing nervous system in response to netrin. Axon repulsion in growth cones may be mediated by its association with DCC that may trigger signaling for repulsion. It also acts as a dependence receptor required for apoptosis induction when not associated with netrin ligand. The chain is Netrin receptor UNC5A (Unc5a) from Mus musculus (Mouse).